Reading from the N-terminus, the 370-residue chain is Chaperone protein DnaJ (370 aa).

The J domain occupies 5–70 (DYYEVLGVSK…EKRSMYDRMG (66 aa)). The CR-type zinc-finger motif lies at 134 to 212 (GVKKTITFTA…CHGSGVADRQ (79 aa)). The Zn(2+) site is built by Cys-147, Cys-150, Cys-164, Cys-167, Cys-186, Cys-189, Cys-200, and Cys-203. 4 CXXCXGXG motif repeats span residues 147–154 (CDVCDGKG), 164–171 (CKTCHGSG), 186–193 (CGTCRGQG), and 200–207 (CHACHGSG). Residues 351-370 (DGEDSASSPKKKSFFDRLFD) form a disordered region.

It belongs to the DnaJ family. Homodimer. Requires Zn(2+) as cofactor.

It is found in the cytoplasm. Participates actively in the response to hyperosmotic and heat shock by preventing the aggregation of stress-denatured proteins and by disaggregating proteins, also in an autonomous, DnaK-independent fashion. Unfolded proteins bind initially to DnaJ; upon interaction with the DnaJ-bound protein, DnaK hydrolyzes its bound ATP, resulting in the formation of a stable complex. GrpE releases ADP from DnaK; ATP binding to DnaK triggers the release of the substrate protein, thus completing the reaction cycle. Several rounds of ATP-dependent interactions between DnaJ, DnaK and GrpE are required for fully efficient folding. Also involved, together with DnaK and GrpE, in the DNA replication of plasmids through activation of initiation proteins. This chain is Chaperone protein DnaJ, found in Acinetobacter baumannii (strain AB0057).